We begin with the raw amino-acid sequence, 597 residues long: Formate--tetrahydrofolate ligase (597 aa).

84 to 91 (TPLGEGKS) contacts ATP.

The protein belongs to the formate--tetrahydrofolate ligase family.

The enzyme catalyses (6S)-5,6,7,8-tetrahydrofolate + formate + ATP = (6R)-10-formyltetrahydrofolate + ADP + phosphate. It functions in the pathway one-carbon metabolism; tetrahydrofolate interconversion. The protein is Formate--tetrahydrofolate ligase of Dehalococcoides mccartyi (strain CBDB1).